We begin with the raw amino-acid sequence, 107 residues long: Putative ankyrin repeat protein RP714 (107 aa).

3 ANK repeats span residues 7–36, 40–69, and 73–102; these read PPLS…DIDV, NGNS…TIDA, and ELAT…NKSA.

The sequence is that of Putative ankyrin repeat protein RP714 from Rickettsia prowazekii (strain Madrid E).